Reading from the N-terminus, the 115-residue chain is NAD(P)H-quinone oxidoreductase subunit M (115 aa).

Belongs to the complex I NdhM subunit family. As to quaternary structure, NDH-1 can be composed of about 15 different subunits; different subcomplexes with different compositions have been identified which probably have different functions.

The protein localises to the cellular thylakoid membrane. The enzyme catalyses a plastoquinone + NADH + (n+1) H(+)(in) = a plastoquinol + NAD(+) + n H(+)(out). The catalysed reaction is a plastoquinone + NADPH + (n+1) H(+)(in) = a plastoquinol + NADP(+) + n H(+)(out). Its function is as follows. NDH-1 shuttles electrons from an unknown electron donor, via FMN and iron-sulfur (Fe-S) centers, to quinones in the respiratory and/or the photosynthetic chain. The immediate electron acceptor for the enzyme in this species is believed to be plastoquinone. Couples the redox reaction to proton translocation, and thus conserves the redox energy in a proton gradient. Cyanobacterial NDH-1 also plays a role in inorganic carbon-concentration. This chain is NAD(P)H-quinone oxidoreductase subunit M, found in Prochlorococcus marinus (strain MIT 9515).